A 255-amino-acid polypeptide reads, in one-letter code: uncharacterized protein (255 aa).

A disordered region spans residues 42-67 (ACSGSPPEPGKGRPDTTPEQEVPVTA).

This is an uncharacterized protein from Mycobacterium tuberculosis (strain CDC 1551 / Oshkosh).